The primary structure comprises 83 residues: RNA-binding protein Hfq (83 aa).

The Sm domain occupies 10–69 (DPFLNALRREHVPVSIYLVNGIKLQGQIESFDQYVVLLRNTVTQMVYKHAISTIVPGRAV).

The protein belongs to the Hfq family. Homohexamer.

Its function is as follows. RNA chaperone that binds small regulatory RNA (sRNAs) and mRNAs to facilitate mRNA translational regulation in response to envelope stress, environmental stress and changes in metabolite concentrations. Also binds with high specificity to tRNAs. This Acidovorax ebreus (strain TPSY) (Diaphorobacter sp. (strain TPSY)) protein is RNA-binding protein Hfq.